The following is a 453-amino-acid chain: Chromosomal replication initiator protein DnaA (453 aa).

The domain I, interacts with DnaA modulators stretch occupies residues 1 to 79 (MKSLIQEKWN…KTAIAEVINQ (79 aa)). The interval 79 to 111 (QDFEIEFVLLSQTKAEEKVQTQAPNKIKNESLS) is domain II. Residues 112–330 (YLNPRYTFDT…GALTKIVALS (219 aa)) form a domain III, AAA+ region region. Glycine 156, glycine 158, lysine 159, and threonine 160 together coordinate ATP. Positions 331–453 (RLKKKEVDVI…VLIKKINPTP (123 aa)) are domain IV, binds dsDNA.

It belongs to the DnaA family. As to quaternary structure, oligomerizes as a right-handed, spiral filament on DNA at oriC.

Its subcellular location is the cytoplasm. Functionally, plays an essential role in the initiation and regulation of chromosomal replication. ATP-DnaA binds to the origin of replication (oriC) to initiate formation of the DNA replication initiation complex once per cell cycle. Binds the DnaA box (a 9 base pair repeat at the origin) and separates the double-stranded (ds)DNA. Forms a right-handed helical filament on oriC DNA; dsDNA binds to the exterior of the filament while single-stranded (ss)DNA is stabiized in the filament's interior. The ATP-DnaA-oriC complex binds and stabilizes one strand of the AT-rich DNA unwinding element (DUE), permitting loading of DNA polymerase. After initiation quickly degrades to an ADP-DnaA complex that is not apt for DNA replication. Binds acidic phospholipids. In Lachnoclostridium phytofermentans (strain ATCC 700394 / DSM 18823 / ISDg) (Clostridium phytofermentans), this protein is Chromosomal replication initiator protein DnaA.